Here is an 89-residue protein sequence, read N- to C-terminus: Large ribosomal subunit protein bL27 (89 aa).

A disordered region spans residues 1-21; the sequence is MAHKKAGGSSRNGRDSQSKRL.

The protein belongs to the bacterial ribosomal protein bL27 family.

This Rhizobium leguminosarum bv. trifolii (strain WSM2304) protein is Large ribosomal subunit protein bL27.